The chain runs to 466 residues: ATP synthase subunit beta (466 aa).

155–162 (GGAGVGKT) is an ATP binding site.

This sequence belongs to the ATPase alpha/beta chains family. In terms of assembly, F-type ATPases have 2 components, CF(1) - the catalytic core - and CF(0) - the membrane proton channel. CF(1) has five subunits: alpha(3), beta(3), gamma(1), delta(1), epsilon(1). CF(0) has three main subunits: a(1), b(2) and c(9-12). The alpha and beta chains form an alternating ring which encloses part of the gamma chain. CF(1) is attached to CF(0) by a central stalk formed by the gamma and epsilon chains, while a peripheral stalk is formed by the delta and b chains.

The protein resides in the cell inner membrane. It catalyses the reaction ATP + H2O + 4 H(+)(in) = ADP + phosphate + 5 H(+)(out). In terms of biological role, produces ATP from ADP in the presence of a proton gradient across the membrane. The catalytic sites are hosted primarily by the beta subunits. The chain is ATP synthase subunit beta from Azoarcus sp. (strain BH72).